The chain runs to 236 residues: MTPRLFALIPCAGTGSRSGSAVPKQYRTLAGRALLHYTLAAFDACSEFAQTLVVLAPDDSHFDARRFAGLRFAVRRCGGGSRQASVLKGLLELAEFGATDHDWVLVHDAARPGITPELIRTLVATLKDDPVGGIVALPVADTLKRVPAGGDAIARTESRDALWQAQTPQMFRIGMLREAILQAQREGHDLTDEASAIEWAGHTPRVVQGSLRNFKVTYPEDFALAEAILARPANAS.

It belongs to the IspD/TarI cytidylyltransferase family. IspD subfamily.

The enzyme catalyses 2-C-methyl-D-erythritol 4-phosphate + CTP + H(+) = 4-CDP-2-C-methyl-D-erythritol + diphosphate. Its pathway is isoprenoid biosynthesis; isopentenyl diphosphate biosynthesis via DXP pathway; isopentenyl diphosphate from 1-deoxy-D-xylulose 5-phosphate: step 2/6. In terms of biological role, catalyzes the formation of 4-diphosphocytidyl-2-C-methyl-D-erythritol from CTP and 2-C-methyl-D-erythritol 4-phosphate (MEP). This is 2-C-methyl-D-erythritol 4-phosphate cytidylyltransferase from Burkholderia orbicola (strain AU 1054).